The primary structure comprises 32 residues: U3-cyrtautoxin-As1a (32 aa).

3 disulfide bridges follow: Cys4-Cys19, Cys11-Cys24, and Cys18-Cys29.

The protein belongs to the neurotoxin 14 (magi-1) family. To aptotoxin III. In terms of tissue distribution, expressed by the venom gland.

The protein resides in the secreted. Functionally, is both paralytic and lethal, when injected into lepidopteran larvae. Is a slower acting toxin, being lethal at 24 hours, but not paralytic at 1 hour post-injection. The protein is U3-cyrtautoxin-As1a of Apomastus schlingeri (Trap-door spider).